Reading from the N-terminus, the 569-residue chain is MTIAAAPARQTDRSATGFNPAYVTTAKAVSVPVQVPPATVVSEGLGKDALISWFRGEFAAANAIIDAMCSHLRIAEEAVSGSEYEAVFAAIHRRRLNWIPVLQMQKYHSIAEVAIELQKVAAKKAEDLKQKKTEEEAEEDLKEVVATEEEEVKKECFNGEKVTENDVNGDVEDVEDDSPTSDITDSGSHQDVHQTVVADTAHQIICHSHEDCDARSCEIKPIKGFQAKEQVKGHTVNVVKGLKLYEELLKEDEISKLLDFVAELREAGINGKLAGESFILFNKQIKGNKRELIQLGVPIFGHVKADENSNDTNNSVNIEPIPPLLESVIDHFVTWRLIPEYKRPNGCVINFFEEGEYSQPFLKPPHLEQPISTLVLSESTMAYGRILSSDNEGNFRGPLTLSLKQGSLLVMRGNSADMARHVMCPSQNKRVSITFFRIRPDTYHNHSQPNSPRNDGVMTMWQPYQMTPTPFLNGYDHSIDMMPKLGVLRPPMVMMAPPPVQPMILPSPNVMGTGGGTGVFLPWASVNSSRKHVKHLPPRAQKKRLLPLPPAASSSPAGGSTSEPVITVG.

The stretch at 118-151 forms a coiled coil; the sequence is QKVAAKKAEDLKQKKTEEEAEEDLKEVVATEEEE. Residues 164 to 190 are disordered; that stretch reads ENDVNGDVEDVEDDSPTSDITDSGSHQ. Positions 167 to 179 are enriched in acidic residues; that stretch reads VNGDVEDVEDDSP. Over residues 180 to 189 the composition is skewed to polar residues; the sequence is TSDITDSGSH. Fe cation contacts are provided by His-366, Glu-368, and His-421. Arg-430 contacts 2-oxoglutarate. Positions 531–545 are enriched in basic residues; it reads KHVKHLPPRAQKKRL. The segment at 531–569 is disordered; the sequence is KHVKHLPPRAQKKRLLPLPPAASSSPAGGSTSEPVITVG. Residues 551-560 are compositionally biased toward low complexity; that stretch reads AASSSPAGGS.

This sequence belongs to the alkB family. The cofactor is Fe(2+).

The enzyme catalyses an N(6)-methyladenosine in mRNA + 2-oxoglutarate + O2 = an adenosine in mRNA + formaldehyde + succinate + CO2. Functionally, dioxygenase that demethylates RNA by oxidative demethylation: specifically demethylates N(6)-methyladenosine (m6A) RNA, the most prevalent internal modification of messenger RNA (mRNA) in higher eukaryotes. ALKBH10B-mediated mRNA m6A demethylation stabilizes the mRNA of the key flowering time regulators FT, SPL3 and SPL9, which are involved in the control of floral transition. The sequence is that of RNA demethylase ALKBH10B from Arabidopsis thaliana (Mouse-ear cress).